Reading from the N-terminus, the 167-residue chain is Methylated-DNA--protein-cysteine methyltransferase (167 aa).

Residue C128 is the Nucleophile; methyl group acceptor of the active site.

Belongs to the MGMT family.

It is found in the cytoplasm. It carries out the reaction a 6-O-methyl-2'-deoxyguanosine in DNA + L-cysteinyl-[protein] = S-methyl-L-cysteinyl-[protein] + a 2'-deoxyguanosine in DNA. The enzyme catalyses a 4-O-methyl-thymidine in DNA + L-cysteinyl-[protein] = a thymidine in DNA + S-methyl-L-cysteinyl-[protein]. Involved in the cellular defense against the biological effects of O6-methylguanine (O6-MeG) and O4-methylthymine (O4-MeT) in DNA. Repairs the methylated nucleobase in DNA by stoichiometrically transferring the methyl group to a cysteine residue in the enzyme. This is a suicide reaction: the enzyme is irreversibly inactivated. The sequence is that of Methylated-DNA--protein-cysteine methyltransferase from Methanocaldococcus jannaschii (strain ATCC 43067 / DSM 2661 / JAL-1 / JCM 10045 / NBRC 100440) (Methanococcus jannaschii).